Reading from the N-terminus, the 117-residue chain is Nascent polypeptide-associated complex protein (117 aa).

Positions 9–77 constitute an NAC-A/B domain; that stretch reads PKQLKQMQRA…ARERSLEAEM (69 aa).

The protein belongs to the NAC-alpha family. As to quaternary structure, homodimer. Interacts with the ribosome. Binds ribosomal RNA.

Functionally, contacts the emerging nascent chain on the ribosome. This chain is Nascent polypeptide-associated complex protein, found in Methanothermobacter thermautotrophicus (strain ATCC 29096 / DSM 1053 / JCM 10044 / NBRC 100330 / Delta H) (Methanobacterium thermoautotrophicum).